Here is a 199-residue protein sequence, read N- to C-terminus: Nucleoside triphosphate pyrophosphatase (199 aa).

The active-site Proton acceptor is aspartate 76.

It belongs to the Maf family. Requires a divalent metal cation as cofactor.

The protein localises to the cytoplasm. The enzyme catalyses a ribonucleoside 5'-triphosphate + H2O = a ribonucleoside 5'-phosphate + diphosphate + H(+). The catalysed reaction is a 2'-deoxyribonucleoside 5'-triphosphate + H2O = a 2'-deoxyribonucleoside 5'-phosphate + diphosphate + H(+). Nucleoside triphosphate pyrophosphatase. May have a dual role in cell division arrest and in preventing the incorporation of modified nucleotides into cellular nucleic acids. The protein is Nucleoside triphosphate pyrophosphatase of Caulobacter vibrioides (strain ATCC 19089 / CIP 103742 / CB 15) (Caulobacter crescentus).